We begin with the raw amino-acid sequence, 110 residues long: DNA-binding protein Mlab_1482 (110 aa).

It belongs to the PDCD5 family.

The protein is DNA-binding protein Mlab_1482 of Methanocorpusculum labreanum (strain ATCC 43576 / DSM 4855 / Z).